Reading from the N-terminus, the 208-residue chain is Small ribosomal subunit protein uS4 (208 aa).

Residues 99 to 165 (RRLDNVVFQL…PRLKEILSSL (67 aa)) enclose the S4 RNA-binding domain.

The protein belongs to the universal ribosomal protein uS4 family. In terms of assembly, part of the 30S ribosomal subunit. Contacts protein S5. The interaction surface between S4 and S5 is involved in control of translational fidelity.

Functionally, one of the primary rRNA binding proteins, it binds directly to 16S rRNA where it nucleates assembly of the body of the 30S subunit. In terms of biological role, with S5 and S12 plays an important role in translational accuracy. The polypeptide is Small ribosomal subunit protein uS4 (Desulfitobacterium hafniense (strain DSM 10664 / DCB-2)).